The chain runs to 308 residues: Eukaryotic translation initiation factor 3 subunit G (308 aa).

The tract at residues 1 to 23 (MAPVAAPSTSQPAGGKPMNWADE) is disordered. Residues 225-303 (PTLRVTNLSE…LILSCQWSLP (79 aa)) form the RRM domain.

It belongs to the eIF-3 subunit G family. As to quaternary structure, component of the eukaryotic translation initiation factor 3 (eIF-3) complex.

The protein resides in the cytoplasm. RNA-binding component of the eukaryotic translation initiation factor 3 (eIF-3) complex, which is involved in protein synthesis of a specialized repertoire of mRNAs and, together with other initiation factors, stimulates binding of mRNA and methionyl-tRNAi to the 40S ribosome. The eIF-3 complex specifically targets and initiates translation of a subset of mRNAs involved in cell proliferation. This subunit can bind 18S rRNA. This Mycosarcoma maydis (Corn smut fungus) protein is Eukaryotic translation initiation factor 3 subunit G.